Consider the following 1080-residue polypeptide: Ubiquitin-activating enzyme E1 1 (1080 aa).

The segment covering 1–14 has biased composition (basic and acidic residues); it reads MLHKRASEANDKND. Disordered stretches follow at residues 1–20 and 29–50; these read MLHKRASEANDKNDNTIIGS and RIDFTESSSDKSSSILASGSSR. The span at 38–49 shows a compositional bias: low complexity; sequence DKSSSILASGSS. ATP contacts are provided by residues Ala502, Asp528, Arg539, Lys552, and 600-601; that span reads DN. Residue Cys656 is the Glycyl thioester intermediate of the active site.

Belongs to the ubiquitin-activating E1 family. As to quaternary structure, monomer. As to expression, expressed in leaves, flowers, roots and stems. Detected in germinating seeds, cotyledons, hypocotyls, vascular tissues, anthers, filaments, pollen, style, stigma, sepals, petals, ovary, developing ovules, funiculi and silique walls.

It carries out the reaction ATP + ubiquitin + [E1 ubiquitin-activating enzyme]-L-cysteine = AMP + diphosphate + S-ubiquitinyl-[E1 ubiquitin-activating enzyme]-L-cysteine.. The protein operates within protein modification; protein ubiquitination. Activates ubiquitin by first adenylating its C-terminal glycine residue with ATP, and thereafter linking this residue to the side chain of a cysteine residue in E1, yielding a ubiquitin-E1 thioester and free AMP. The protein is Ubiquitin-activating enzyme E1 1 (UBA1) of Arabidopsis thaliana (Mouse-ear cress).